The primary structure comprises 245 residues: 1-(5-phosphoribosyl)-5-[(5-phosphoribosylamino)methylideneamino] imidazole-4-carboxamide isomerase (245 aa).

The active-site Proton acceptor is the D7. D129 (proton donor) is an active-site residue.

This sequence belongs to the HisA/HisF family.

It localises to the cytoplasm. The catalysed reaction is 1-(5-phospho-beta-D-ribosyl)-5-[(5-phospho-beta-D-ribosylamino)methylideneamino]imidazole-4-carboxamide = 5-[(5-phospho-1-deoxy-D-ribulos-1-ylimino)methylamino]-1-(5-phospho-beta-D-ribosyl)imidazole-4-carboxamide. It participates in amino-acid biosynthesis; L-histidine biosynthesis; L-histidine from 5-phospho-alpha-D-ribose 1-diphosphate: step 4/9. The polypeptide is 1-(5-phosphoribosyl)-5-[(5-phosphoribosylamino)methylideneamino] imidazole-4-carboxamide isomerase (Escherichia coli O9:H4 (strain HS)).